Here is a 631-residue protein sequence, read N- to C-terminus: 1-deoxy-D-xylulose-5-phosphate synthase (631 aa).

Residues His-73 and 114–116 (GHS) each bind thiamine diphosphate. Asp-145 serves as a coordination point for Mg(2+). Residues 146-147 (GA), Asn-174, Tyr-285, and Glu-366 contribute to the thiamine diphosphate site. Asn-174 contributes to the Mg(2+) binding site.

Belongs to the transketolase family. DXPS subfamily. In terms of assembly, homodimer. The cofactor is Mg(2+). Thiamine diphosphate serves as cofactor.

The enzyme catalyses D-glyceraldehyde 3-phosphate + pyruvate + H(+) = 1-deoxy-D-xylulose 5-phosphate + CO2. It participates in metabolic intermediate biosynthesis; 1-deoxy-D-xylulose 5-phosphate biosynthesis; 1-deoxy-D-xylulose 5-phosphate from D-glyceraldehyde 3-phosphate and pyruvate: step 1/1. In terms of biological role, catalyzes the acyloin condensation reaction between C atoms 2 and 3 of pyruvate and glyceraldehyde 3-phosphate to yield 1-deoxy-D-xylulose-5-phosphate (DXP). The chain is 1-deoxy-D-xylulose-5-phosphate synthase from Desulfitobacterium hafniense (strain Y51).